The following is a 408-amino-acid chain: MPEIPVGSQIFDVVFHPSSAIAYTGLLNGHIKAFAYGEQGDSHNLFSLRPSKRSCRGLSLNGDGSKLYAVGKSKALHIVDTTTTDIDARSAAHDCAINRVKSLMPWVVATGDDDGTVKLWDPRKRDSVKTYTQHFDYISDFLWLDDKKQLVATSGDGTLSVMDVRAKEPKVVAQSEDQEDDLLSIVAIKSAQKILVGTQLGILSVFNRKKGWGDCVDRIPGHPLSIDTLCNIPDDIPDTDPTSTVLTGSSDGFVRVVQILPTKFLGVVADHGEFPVERIAVGGGRYWVGSVGHDEVLRMTDLGAFFHENHVDSDEEEDDEEEWGGIEGADGSEGEEDEEGKAVEGSAEKGGGASSDESDDEDEEMEPQLGDQSSKRKRQPEVELPDPSRKSKKGKKETVIDKDFFDGL.

WD repeat units follow at residues 5–44, 50–86, 87–130, 133–172, 177–216, and 221–267; these read PVGSQIFDVVFHPSSAIAYTGLLNGHIKAFAYGEQGDSHN, PSKRSCRGLSLNGDGSKLYAVGKSKALHIVDTTTTDI, DARS…SVKT, QHFDYISDFLWLDDKKQLVATSGDGTLSVMDVRAKEPKVV, DQEDDLLSIVAIKSAQKILVGTQLGILSVFNRKKGWGDCV, and GHPL…FLGV. Residues 311–408 form a disordered region; that stretch reads VDSDEEEDDE…VIDKDFFDGL (98 aa). Acidic residues-rich tracts occupy residues 313 to 339 and 356 to 366; these read SDEEEDDEEEWGGIEGADGSEGEEDEE and DESDDEDEEME. Residues 396 to 408 are compositionally biased toward basic and acidic residues; it reads KETVIDKDFFDGL.

The protein belongs to the WD repeat WDR55 family.

The protein resides in the nucleus. Its subcellular location is the nucleolus. In Coprinopsis cinerea (strain Okayama-7 / 130 / ATCC MYA-4618 / FGSC 9003) (Inky cap fungus), this protein is WD repeat-containing protein JIP5 (JIP5).